We begin with the raw amino-acid sequence, 145 residues long: Transcription antitermination protein NusB (145 aa).

It belongs to the NusB family.

Functionally, involved in transcription antitermination. Required for transcription of ribosomal RNA (rRNA) genes. Binds specifically to the boxA antiterminator sequence of the ribosomal RNA (rrn) operons. This is Transcription antitermination protein NusB from Burkholderia cenocepacia (strain HI2424).